The following is a 316-amino-acid chain: L-lactate dehydrogenase 1 (316 aa).

The NAD(+) site is built by valine 17, aspartate 38, lysine 43, and tyrosine 69. Substrate is bound by residues arginine 92 and 124–127 (NPVD). NAD(+)-binding positions include 122–124 (VSN) and threonine 147. Substrate is bound at residue 152–155 (DTSR). The Proton acceptor role is filled by histidine 179. Threonine 234 contributes to the substrate binding site.

Belongs to the LDH/MDH superfamily. LDH family. In terms of assembly, homotetramer.

The protein resides in the cytoplasm. The catalysed reaction is (S)-lactate + NAD(+) = pyruvate + NADH + H(+). The protein operates within fermentation; pyruvate fermentation to lactate; (S)-lactate from pyruvate: step 1/1. Functionally, catalyzes the conversion of lactate to pyruvate. The sequence is that of L-lactate dehydrogenase 1 from Bifidobacterium longum subsp. longum (strain ATCC 15707 / DSM 20219 / JCM 1217 / NCTC 11818 / E194b).